A 139-amino-acid polypeptide reads, in one-letter code: Large ribosomal subunit protein mL42 (139 aa).

A mitochondrion-targeting transit peptide spans 1 to 32 (MAVAAVKWVMSKRTILKHLFPVQNGALYCVCH).

This sequence belongs to the mitochondrion-specific ribosomal protein mL42 family. In terms of assembly, component of the mitochondrial ribosome large subunit (39S) which comprises a 16S rRNA and about 50 distinct proteins. Component of the mitochondrial ribosome small subunit (28S) which comprises a 12S rRNA and about 30 distinct proteins.

It localises to the mitochondrion. This is Large ribosomal subunit protein mL42 (MRPL42) from Pongo abelii (Sumatran orangutan).